A 396-amino-acid polypeptide reads, in one-letter code: NADH-quinone oxidoreductase subunit D (396 aa).

It belongs to the complex I 49 kDa subunit family. NDH-1 is composed of 14 different subunits. Subunits NuoB, C, D, E, F, and G constitute the peripheral sector of the complex.

Its subcellular location is the cell inner membrane. It catalyses the reaction a quinone + NADH + 5 H(+)(in) = a quinol + NAD(+) + 4 H(+)(out). Functionally, NDH-1 shuttles electrons from NADH, via FMN and iron-sulfur (Fe-S) centers, to quinones in the respiratory chain. The immediate electron acceptor for the enzyme in this species is believed to be ubiquinone. Couples the redox reaction to proton translocation (for every two electrons transferred, four hydrogen ions are translocated across the cytoplasmic membrane), and thus conserves the redox energy in a proton gradient. The chain is NADH-quinone oxidoreductase subunit D from Methylobacterium radiotolerans (strain ATCC 27329 / DSM 1819 / JCM 2831 / NBRC 15690 / NCIMB 10815 / 0-1).